A 1587-amino-acid chain; its full sequence is Mediator of RNA polymerase II transcription subunit 23 (1587 aa).

Disordered regions lie at residues 1374 to 1484 (SQSE…QLQH) and 1567 to 1587 (QHQQ…QQPH). Residues 1385–1404 (PPEKEKSPEKEKEQEQEQHV) show a composition bias toward basic and acidic residues. The interval 1387 to 1404 (EKEKSPEKEKEQEQEQHV) is acidic. Residues 1410–1426 (LESTPSVSSLPQMQHHL) are compositionally biased toward polar residues. Residues 1430–1450 (PLLPSHQMMPPPQQHSSSLQH) show a composition bias toward low complexity. Positions 1463–1484 (DTSQHQTIQQQSNHPTQQQLQH) are enriched in polar residues. Residues 1567–1576 (QHQQYMQQQQ) are compositionally biased toward low complexity. Residues 1577 to 1587 (QHHHQHQQQPH) are compositionally biased toward basic residues.

This sequence belongs to the Mediator complex subunit 23 family. Component of the Mediator complex. Interacts with let-19/mdt-13.

It is found in the nucleus. Functionally, component of the Mediator complex, a coactivator involved in regulated gene transcription of nearly all RNA polymerase II-dependent genes. Mediator functions as a bridge to convey information from gene-specific regulatory proteins to the basal RNA polymerase II transcription machinery. Mediator is recruited to promoters by direct interactions with regulatory proteins and serves as a scaffold for the assembly of a functional pre-initiation complex with RNA polymerase II and the general transcription factors. Functions downstream of receptor let-23 and let-60/Ras during vulval induction likely by down-regulating the expression of phosphatase dep-1 and lin-12/Notch in vulva precursor cell descendants with a primary cell fate. Acts to repress beta-catenin target genes. Required for asymmetric division of T-cells. Plays a role in responses to M.nematophilum-mediated bacterial infection by promoting tail swelling and preventing constipation. This chain is Mediator of RNA polymerase II transcription subunit 23 (sur-2), found in Caenorhabditis elegans.